The chain runs to 126 residues: Fluoride-specific ion channel FluC (126 aa).

Helical transmembrane passes span 5–25 (ILCV…FYFG), 34–54 (YIFI…GFVL), 71–91 (VTGL…NAVF), and 100–120 (FFLN…LGIY). The Na(+) site is built by glycine 76 and threonine 79.

The protein belongs to the fluoride channel Fluc/FEX (TC 1.A.43) family.

The protein localises to the cell inner membrane. The catalysed reaction is fluoride(in) = fluoride(out). Na(+) is not transported, but it plays an essential structural role and its presence is essential for fluoride channel function. Functionally, fluoride-specific ion channel. Important for reducing fluoride concentration in the cell, thus reducing its toxicity. The protein is Fluoride-specific ion channel FluC of Campylobacter hominis (strain ATCC BAA-381 / DSM 21671 / CCUG 45161 / LMG 19568 / NCTC 13146 / CH001A).